A 182-amino-acid chain; its full sequence is Putative manganese efflux pump MntP (182 aa).

Helical transmembrane passes span 6 to 26, 37 to 57, 71 to 91, 101 to 121, 131 to 151, and 162 to 182; these read LIPL…VSLG, ILYI…IGMV, HFAG…SSIL, IGIS…SVGL, IITI…GLFI, and YGEI…LFPI.

This sequence belongs to the MntP (TC 9.B.29) family.

Its subcellular location is the cell membrane. In terms of biological role, probably functions as a manganese efflux pump. This chain is Putative manganese efflux pump MntP, found in Bacillus thuringiensis subsp. konkukian (strain 97-27).